The primary structure comprises 577 residues: Arginine--tRNA ligase (577 aa).

The 'HIGH' region motif lies at 122–132 (PNVAKEMHVGH).

It belongs to the class-I aminoacyl-tRNA synthetase family. In terms of assembly, monomer.

The protein localises to the cytoplasm. It catalyses the reaction tRNA(Arg) + L-arginine + ATP = L-arginyl-tRNA(Arg) + AMP + diphosphate. This chain is Arginine--tRNA ligase, found in Enterobacter sp. (strain 638).